The sequence spans 483 residues: Protein EFFECTOR OF TRANSCRIPTION 2 (483 aa).

The GIY-YIG domain maps to 64–112; sequence SCPGLYELGVAVIGQEQCRKLEPDIVLASYLGQAESVRSRLQRYGRSGA. 2 Cx9Cx9RCx2HK repeats span residues 278-303 and 338-363; these read CGVL…IEHK and CGVI…EDHK. Residues 380–396 show a composition bias toward basic and acidic residues; that stretch reads EKTVKDEKPDPESHTES. The tract at residues 380-399 is disordered; that stretch reads EKTVKDEKPDPESHTESIEE. 2 Cx9Cx9RCx2HK repeats span residues 406–431 and 453–478; these read CEAT…WQHK and CGVK…EEHK.

Expressed in vascular tissues of stems, hypocotyls, leaves and flowers. Expressed in the vascular bundles of xylem in shoot parenchyma cells. Expressed in the remnant cytoplasm of differentiated fiber cells and in protoxylem element of parenchymal cells.

It is found in the cytoplasm. Its subcellular location is the nucleus. Its function is as follows. Transcriptional regulator involved in the regulation of cell differentiation in meristems. Probably regulates the expression of various KNAT genes involved in the maintenance of the cells in an undifferentiated, merismastic state. Plays a role in the regulation of gibberellin 20 oxidase and the gibberellin-regulated protein GASA4. Localizes in the nucleus during the cellular differentiation state and may act via a single strand cutting domain. Transcriptional regulator required for the induction of dormancy during late seed development. Interacts genetically with FUS3 and may be component of the same regulatory pathway during embryogenesis. Binds both linear and supercoiled DNA without sequence preference. The sequence is that of Protein EFFECTOR OF TRANSCRIPTION 2 from Arabidopsis thaliana (Mouse-ear cress).